The chain runs to 154 residues: Ribonuclease H (154 aa).

Residues 1–142 (MTKQVEIFTD…CDELAREGAN (142 aa)) enclose the RNase H type-1 domain. Positions 10, 48, 70, and 134 each coordinate Mg(2+).

It belongs to the RNase H family. In terms of assembly, monomer. It depends on Mg(2+) as a cofactor.

It localises to the cytoplasm. It catalyses the reaction Endonucleolytic cleavage to 5'-phosphomonoester.. Functionally, endonuclease that specifically degrades the RNA of RNA-DNA hybrids. The protein is Ribonuclease H of Yersinia enterocolitica serotype O:8 / biotype 1B (strain NCTC 13174 / 8081).